Reading from the N-terminus, the 1145-residue chain is Protocadherin-19 (1145 aa).

An N-terminal signal peptide occupies residues 1–21 (MESLLLPVLLLLAVLWTQAAA). Cadherin domains lie at 22 to 129 (LINL…APSF), 130 to 238 (PAAQ…NPVF), 239 to 346 (GEST…PPII), 350 to 453 (SVNS…HPHF), 454 to 563 (SKPY…TPVI), and 569 to 672 (INGT…QESM). The Extracellular segment spans residues 22 to 678 (LINLKYSVEE…QESMGSVNLS (657 aa)). Ca(2+) is bound by residues glutamate 31, glutamate 32, aspartate 88, and aspartate 90. An intrachain disulfide couples cysteine 93 to cysteine 99. Residues aspartate 121, asparagine 123, aspartate 124, asparagine 125, glutamate 140, aspartate 155, aspartate 157, glutamate 199, aspartate 212, aspartate 230, serine 231, asparagine 232, aspartate 233, asparagine 234, and glutamate 249 each coordinate Ca(2+). A glycan (N-linked (GlcNAc...) asparagine) is linked at asparagine 261. 15 residues coordinate Ca(2+): aspartate 264, aspartate 266, asparagine 270, aspartate 305, glutamate 307, aspartate 338, asparagine 340, aspartate 341, asparagine 342, glutamate 360, aspartate 375, aspartate 377, asparagine 381, aspartate 412, and glutamate 414. An N-linked (GlcNAc...) asparagine glycan is attached at asparagine 420. 13 residues coordinate Ca(2+): aspartate 427, aspartate 445, glutamate 446, asparagine 447, aspartate 448, asparagine 449, glutamate 464, aspartate 479, aspartate 481, asparagine 485, asparagine 522, glutamate 524, and aspartate 537. Asparagine 485 carries an N-linked (GlcNAc...) asparagine glycan. Asparagine 546 carries N-linked (GlcNAc...) asparagine glycosylation. Residues aspartate 555, valine 556, asparagine 557, aspartate 558, and asparagine 559 each contribute to the Ca(2+) site. Asparagine 570 is a glycosylation site (N-linked (GlcNAc...) asparagine). Residues aspartate 594, aspartate 596, asparagine 600, and aspartate 646 each coordinate Ca(2+). Asparagine 676 carries N-linked (GlcNAc...) asparagine glycosylation. A helical membrane pass occupies residues 679 to 699 (LIFIIALGSIAGILFVTMIFV). At 700-1145 (AIKCKRDNKE…SVKRLKDIVL (446 aa)) the chain is on the cytoplasmic side. 2 disordered regions span residues 901–921 (GNSLKDSGHEESDQTDSEHDV) and 1094–1145 (LEHH…DIVL). Composition is skewed to basic and acidic residues over residues 906 to 921 (DSGHEESDQTDSEHDV) and 1106 to 1145 (SEAEPRGADNEKVMHEVNPIRKDGRDKESPSVKRLKDIVL).

As to quaternary structure, homodimer; antiparallel.

It is found in the cell membrane. Calcium-dependent cell-adhesion protein. The protein is Protocadherin-19 (Pcdh19) of Mus musculus (Mouse).